Here is a 250-residue protein sequence, read N- to C-terminus: MSETAQTTVDQSEVDRFSAMAAEWWSPTGKFRPLHKFNPVRLEYIRNRVCENFGRNPKAHRPLEGLRVLDIGCGGGLLSEPVARMGATVVGADPSEKNIGIASTHARESGVSVDYRAVTAEQLQEAGESFDVILNMEVVEHVANVDLFVTTCAKMVRPGGLMFAATINRTLKARALAIFAAENVLRWLPRGTHQYEKLVRPEELERPIVASGMDIIHRTGVFYNVLQDRWNLSPDMEVNYMMMAKRPAAA.

Arginine 41, glycine 72, aspartate 93, and methionine 136 together coordinate S-adenosyl-L-methionine.

It belongs to the methyltransferase superfamily. UbiG/COQ3 family.

The enzyme catalyses a 3-demethylubiquinol + S-adenosyl-L-methionine = a ubiquinol + S-adenosyl-L-homocysteine + H(+). It catalyses the reaction a 3-(all-trans-polyprenyl)benzene-1,2-diol + S-adenosyl-L-methionine = a 2-methoxy-6-(all-trans-polyprenyl)phenol + S-adenosyl-L-homocysteine + H(+). It functions in the pathway cofactor biosynthesis; ubiquinone biosynthesis. O-methyltransferase that catalyzes the 2 O-methylation steps in the ubiquinone biosynthetic pathway. This is Ubiquinone biosynthesis O-methyltransferase from Agrobacterium fabrum (strain C58 / ATCC 33970) (Agrobacterium tumefaciens (strain C58)).